The sequence spans 415 residues: MNVLEIGAGGREHALAYKLNQSNLVKQVFAIPGNEAMTPIAEVHTEISESDHQAILDFAKRQNVDWVVIGPEQPLIDGLADILRANGFKVFGPNKQAAQIEGSKLFAKKIMEKYNIPTADYKEVERKKDALTYIENCELPVVVKKDGLAAGKGVIIADTIEAARSAIEIMYGDEEEGTVVFETFLEGEEFSLMTFVNGDLAVPFDCIAQDHKRAFDHDEGPNTGGMGAYCPVPHISDDVLKLTNETIAQPIAKAMLNEGYQFFGVLYIGAILTKNGPKVIEFNARFGDPEAQVLLSRMESDLMQHIIDLDEGKRTEFKWKNESIVGVMLASKGYPDAYEKGHKVSGFDLNENYFVSGLKKQGDTFVTSGGRVILAIGKGDNVQDAQRDAYEKVSQIQSDHLFYRHDIANKALQLK.

The region spanning 108–311 (KKIMEKYNIP…LMQHIIDLDE (204 aa)) is the ATP-grasp domain. 134 to 191 (IENCELPVVVKKDGLAAGKGVIIADTIEAARSAIEIMYGDEEEGTVVFETFLEGEEFS) contributes to the ATP binding site. Glutamate 281 and asparagine 283 together coordinate Mg(2+).

This sequence belongs to the GARS family. Mg(2+) is required as a cofactor. Mn(2+) serves as cofactor.

It catalyses the reaction 5-phospho-beta-D-ribosylamine + glycine + ATP = N(1)-(5-phospho-beta-D-ribosyl)glycinamide + ADP + phosphate + H(+). It functions in the pathway purine metabolism; IMP biosynthesis via de novo pathway; N(1)-(5-phospho-D-ribosyl)glycinamide from 5-phospho-alpha-D-ribose 1-diphosphate: step 2/2. This Staphylococcus aureus (strain MW2) protein is Phosphoribosylamine--glycine ligase.